A 405-amino-acid chain; its full sequence is Multidrug resistance protein MdtH (405 aa).

The next 12 helical transmembrane spans lie at 13–33 (YFLLMDNMLVVMGFYVVFPLI), 34–54 (SIRFVDQLGWAALLVGIALGL), 78–95 (MIIAGMLMRALGFVLMGI), 99–116 (PWLLWLSCALSALGGTLF), 139–159 (LLMMQDSACSVIGALLGSWLL), 165–185 (LVCLAGAVLFVFAAIFNAWLL), 213–233 (YVLTLTGYYMLSVQVMLMLPI), 243–263 (AAVKWMYAIEAALSLSLLYPI), 277–297 (LMAGLTVMLLSLFPIGLIEDL), 299–319 (ALFMLIGLFYIGSIIAEPARE), 340–360 (LGLALGGAIGYSGGGWLYDVG), and 365–385 (IPQLPWFMLGLIGFITLLGLY).

Belongs to the major facilitator superfamily. DHA1 family. MdtH (TC 2.A.1.2.21) subfamily.

Its subcellular location is the cell inner membrane. The polypeptide is Multidrug resistance protein MdtH (Sodalis glossinidius (strain morsitans)).